The primary structure comprises 288 residues: DegV domain-containing protein (288 aa).

Positions Ile3 to Gly282 constitute a DegV domain. Thr62 and Ser95 together coordinate hexadecanoate.

Its function is as follows. May bind long-chain fatty acids, such as palmitate, and may play a role in lipid transport or fatty acid metabolism. This is DegV domain-containing protein from Staphylococcus aureus.